Here is a 362-residue protein sequence, read N- to C-terminus: Histidinol-phosphate aminotransferase 2 (362 aa).

At lysine 222 the chain carries N6-(pyridoxal phosphate)lysine.

It belongs to the class-II pyridoxal-phosphate-dependent aminotransferase family. Histidinol-phosphate aminotransferase subfamily. In terms of assembly, homodimer. Pyridoxal 5'-phosphate is required as a cofactor.

The enzyme catalyses L-histidinol phosphate + 2-oxoglutarate = 3-(imidazol-4-yl)-2-oxopropyl phosphate + L-glutamate. The protein operates within amino-acid biosynthesis; L-histidine biosynthesis; L-histidine from 5-phospho-alpha-D-ribose 1-diphosphate: step 7/9. The protein is Histidinol-phosphate aminotransferase 2 of Carboxydothermus hydrogenoformans (strain ATCC BAA-161 / DSM 6008 / Z-2901).